Here is a 295-residue protein sequence, read N- to C-terminus: 4-hydroxybenzoate octaprenyltransferase (295 aa).

8 helical membrane-spanning segments follow: residues 28-48, 51-71, 101-121, 124-144, 159-179, 220-240, 242-262, and 274-294; these read AGWL…AGGF, WHLL…GCCV, ALGV…TTNA, IAWS…KRFV, IPMA…WLVL, VMAF…PFGL, WPLH…WRLI, and FTGN…GFAL.

This sequence belongs to the UbiA prenyltransferase family. Requires Mg(2+) as cofactor.

Its subcellular location is the cell inner membrane. The enzyme catalyses all-trans-octaprenyl diphosphate + 4-hydroxybenzoate = 4-hydroxy-3-(all-trans-octaprenyl)benzoate + diphosphate. It functions in the pathway cofactor biosynthesis; ubiquinone biosynthesis. Functionally, catalyzes the prenylation of para-hydroxybenzoate (PHB) with an all-trans polyprenyl group. Mediates the second step in the final reaction sequence of ubiquinone-8 (UQ-8) biosynthesis, which is the condensation of the polyisoprenoid side chain with PHB, generating the first membrane-bound Q intermediate 3-octaprenyl-4-hydroxybenzoate. The polypeptide is 4-hydroxybenzoate octaprenyltransferase (Paracidovorax citrulli (strain AAC00-1) (Acidovorax citrulli)).